The chain runs to 360 residues: Arginase, non-hepatic 3 (360 aa).

Positions 122, 145, 147, and 149 each coordinate Mn(2+). Residues 147–151, 158–160, and D204 each bind substrate; these read HADIN and SGN. Residues D253 and D255 each contribute to the Mn(2+) site. Substrate-binding residues include T267 and E298.

This sequence belongs to the arginase family. As to quaternary structure, homotrimer. It depends on Mn(2+) as a cofactor. Expressed at differing tadpole stages in tail, intestine, hindlimb and trunk region. Strongest in tadpole tail.

The catalysed reaction is L-arginine + H2O = urea + L-ornithine. It functions in the pathway nitrogen metabolism; urea cycle; L-ornithine and urea from L-arginine: step 1/1. Functionally, as well as its role in the urea cycle, may be involved in tissue remodeling. The sequence is that of Arginase, non-hepatic 3 (arg2-c) from Xenopus laevis (African clawed frog).